The sequence spans 169 residues: MNIGLALIPSKSFQDEVNGYRKRYDTEYARIMPHITIKSHFEINDDELDSVKEEVKKRLEGFGPVDVHATKASSFKPTNNVIYFKVAKTDELEQLFNLFNTEDFHGEAEHPFVPHFTIAQGLTSQEFEDIFGQVELVGVDLKEKIEELSLLRYDEEEDKWKVIDTFKLA.

His-34 functions as the Proton donor in the catalytic mechanism. 2 consecutive short sequence motifs (HXTX) follow at residues 34 to 37 (HITI) and 115 to 118 (HFTI). His-115 serves as the catalytic Proton acceptor.

This sequence belongs to the 2H phosphoesterase superfamily. YjcG family.

The chain is Putative phosphoesterase SH1944 from Staphylococcus haemolyticus (strain JCSC1435).